Here is a 338-residue protein sequence, read N- to C-terminus: Hydroxyproline O-galactosyltransferase HPGT1 (338 aa).

At 1–12 (MARKGSSIRLSS) the chain is on the cytoplasmic side. A helical; Signal-anchor for type II membrane protein membrane pass occupies residues 13-32 (SRISTLLLFMFATFASFYVA). At 33-338 (GRLWQESQTR…WSSEAICAGV (306 aa)) the chain is on the lumenal side.

This sequence belongs to the glycosyltransferase 31 family. The cofactor is Mn(2+). As to expression, expressed in roots, rosette leaves, cauline leaves, stems, flowers and siliques.

Its subcellular location is the golgi apparatus membrane. Its pathway is protein modification; protein glycosylation. Its function is as follows. Possesses hydroxyproline O-galactosyltransferase activity. Transfers galactose from UDP-galactose to hydroxyproline residues in the arabinogalactan proteins (AGPs). Is specific for AGPs containing non-contiguous peptidyl hydroxyproline residues. The addition of galactose onto the peptidyl hydroxyproline residues in AGP core proteins represents the first committed step in arabinogalactan polysaccharide addition. AGP glycans play essential roles in both vegetative and reproductive plant growth. The polypeptide is Hydroxyproline O-galactosyltransferase HPGT1 (Arabidopsis thaliana (Mouse-ear cress)).